A 280-amino-acid chain; its full sequence is 4-hydroxy-3-methylbut-2-enyl diphosphate reductase (280 aa).

Cysteine 12 provides a ligand contact to [4Fe-4S] cluster. Positions 40 and 72 each coordinate (2E)-4-hydroxy-3-methylbut-2-enyl diphosphate. Dimethylallyl diphosphate contacts are provided by histidine 40 and histidine 72. Residues histidine 40 and histidine 72 each coordinate isopentenyl diphosphate. Cysteine 94 lines the [4Fe-4S] cluster pocket. Histidine 122 lines the (2E)-4-hydroxy-3-methylbut-2-enyl diphosphate pocket. Histidine 122 serves as a coordination point for dimethylallyl diphosphate. Histidine 122 provides a ligand contact to isopentenyl diphosphate. Catalysis depends on glutamate 124, which acts as the Proton donor. Threonine 160 contributes to the (2E)-4-hydroxy-3-methylbut-2-enyl diphosphate binding site. A [4Fe-4S] cluster-binding site is contributed by cysteine 188. Residues serine 216, asparagine 218, and serine 260 each contribute to the (2E)-4-hydroxy-3-methylbut-2-enyl diphosphate site. Serine 216, asparagine 218, and serine 260 together coordinate dimethylallyl diphosphate. Isopentenyl diphosphate contacts are provided by serine 216, asparagine 218, and serine 260.

The protein belongs to the IspH family. The cofactor is [4Fe-4S] cluster.

The enzyme catalyses isopentenyl diphosphate + 2 oxidized [2Fe-2S]-[ferredoxin] + H2O = (2E)-4-hydroxy-3-methylbut-2-enyl diphosphate + 2 reduced [2Fe-2S]-[ferredoxin] + 2 H(+). The catalysed reaction is dimethylallyl diphosphate + 2 oxidized [2Fe-2S]-[ferredoxin] + H2O = (2E)-4-hydroxy-3-methylbut-2-enyl diphosphate + 2 reduced [2Fe-2S]-[ferredoxin] + 2 H(+). It functions in the pathway isoprenoid biosynthesis; dimethylallyl diphosphate biosynthesis; dimethylallyl diphosphate from (2E)-4-hydroxy-3-methylbutenyl diphosphate: step 1/1. Its pathway is isoprenoid biosynthesis; isopentenyl diphosphate biosynthesis via DXP pathway; isopentenyl diphosphate from 1-deoxy-D-xylulose 5-phosphate: step 6/6. Catalyzes the conversion of 1-hydroxy-2-methyl-2-(E)-butenyl 4-diphosphate (HMBPP) into a mixture of isopentenyl diphosphate (IPP) and dimethylallyl diphosphate (DMAPP). Acts in the terminal step of the DOXP/MEP pathway for isoprenoid precursor biosynthesis. The chain is 4-hydroxy-3-methylbut-2-enyl diphosphate reductase from Trichlorobacter lovleyi (strain ATCC BAA-1151 / DSM 17278 / SZ) (Geobacter lovleyi).